Here is a 326-residue protein sequence, read N- to C-terminus: Endo-beta-1,4-glucanase A (326 aa).

Residues 1–19 (MRSLVLLSSVLALVAPSKG) form the signal peptide. The Proton donor role is filled by E150. The active-site Nucleophile is E257.

This sequence belongs to the glycosyl hydrolase 5 (cellulase A) family.

It is found in the secreted. It carries out the reaction Endohydrolysis of (1-&gt;4)-beta-D-glucosidic linkages in cellulose, lichenin and cereal beta-D-glucans.. Functionally, has endoglucanase activity on substrates containing beta-1,4 glycosidic bonds, like in carboxymethylcellulose (CMC), hydroxyethylcellulose (HEC) and beta-glucan. Involved in the degradation of complex natural cellulosic substrates. The protein is Endo-beta-1,4-glucanase A (eglA) of Emericella nidulans (strain FGSC A4 / ATCC 38163 / CBS 112.46 / NRRL 194 / M139) (Aspergillus nidulans).